Reading from the N-terminus, the 146-residue chain is D-aminoacyl-tRNA deacylase (146 aa).

Residues Gly-138 to Pro-139 carry the Gly-cisPro motif, important for rejection of L-amino acids motif.

Belongs to the DTD family. Homodimer.

Its subcellular location is the cytoplasm. It catalyses the reaction glycyl-tRNA(Ala) + H2O = tRNA(Ala) + glycine + H(+). It carries out the reaction a D-aminoacyl-tRNA + H2O = a tRNA + a D-alpha-amino acid + H(+). In terms of biological role, an aminoacyl-tRNA editing enzyme that deacylates mischarged D-aminoacyl-tRNAs. Also deacylates mischarged glycyl-tRNA(Ala), protecting cells against glycine mischarging by AlaRS. Acts via tRNA-based rather than protein-based catalysis; rejects L-amino acids rather than detecting D-amino acids in the active site. By recycling D-aminoacyl-tRNA to D-amino acids and free tRNA molecules, this enzyme counteracts the toxicity associated with the formation of D-aminoacyl-tRNA entities in vivo and helps enforce protein L-homochirality. The sequence is that of D-aminoacyl-tRNA deacylase from Xanthomonas axonopodis pv. citri (strain 306).